A 336-amino-acid chain; its full sequence is MMNTLLQQAPSWGTTLWFIIAAVLLLAVVLGFVTYAIYFERKVIGWMQLRIGPNRVGPLGLLQTVADVAKLLLKEDIRPQHADKALFTLAPILAYAPAFAVLAVMPFTDSIRFADLGIGLLYYIALSGITVLGVITAGWASNNKYSLIGGLRSAAQMISYEVPLVMSVVGIVLLTGSMNLKDIVEAQRDVWNIVPQFIGFAVFIIAAQAELNRTPFDLPEAESELVGGYHVEYSGFRFAMFMLAEYVYMFGMGALITILFFGGWLPIHPSLDFIPGIVWFILKFSVYVFLQFWIRATMPRLRVDQLMSFAWKVLLPVALFNILLTAVVVSYQNGMF.

The next 8 helical transmembrane spans lie at 17–37 (WFII…TYAI), 85–105 (ALFT…LAVM), 116–136 (LGIG…GVIT), 154–174 (AAQM…IVLL), 190–210 (VWNI…AQAE), 247–267 (VYMF…WLPI), 274–294 (IPGI…QFWI), and 309–329 (FAWK…AVVV).

Belongs to the complex I subunit 1 family. NDH-1 is composed of 14 different subunits. Subunits NuoA, H, J, K, L, M, N constitute the membrane sector of the complex.

The protein resides in the cell membrane. It carries out the reaction a quinone + NADH + 5 H(+)(in) = a quinol + NAD(+) + 4 H(+)(out). In terms of biological role, NDH-1 shuttles electrons from NADH, via FMN and iron-sulfur (Fe-S) centers, to quinones in the respiratory chain. The immediate electron acceptor for the enzyme in this species is believed to be ubiquinone. Couples the redox reaction to proton translocation (for every two electrons transferred, four hydrogen ions are translocated across the cytoplasmic membrane), and thus conserves the redox energy in a proton gradient. This subunit may bind ubiquinone. In Brevibacillus brevis (strain 47 / JCM 6285 / NBRC 100599), this protein is NADH-quinone oxidoreductase subunit H.